We begin with the raw amino-acid sequence, 52 residues long: ATP synthase F(0) complex subunit 8 (52 aa).

A helical membrane pass occupies residues Leu10 to Phe30.

This sequence belongs to the ATPase protein 8 family. Component of the ATP synthase complex composed at least of ATP5F1A/subunit alpha, ATP5F1B/subunit beta, ATP5MC1/subunit c (homooctomer), MT-ATP6/subunit a, MT-ATP8/subunit 8, ATP5ME/subunit e, ATP5MF/subunit f, ATP5MG/subunit g, ATP5MK/subunit k, ATP5MJ/subunit j, ATP5F1C/subunit gamma, ATP5F1D/subunit delta, ATP5F1E/subunit epsilon, ATP5PF/subunit F6, ATP5PB/subunit b, ATP5PD/subunit d, ATP5PO/subunit OSCP. ATP synthase complex consists of a soluble F(1) head domain (subunits alpha(3) and beta(3)) - the catalytic core - and a membrane F(0) domain - the membrane proton channel (subunits c, a, 8, e, f, g, k and j). These two domains are linked by a central stalk (subunits gamma, delta, and epsilon) rotating inside the F1 region and a stationary peripheral stalk (subunits F6, b, d, and OSCP).

The protein localises to the mitochondrion membrane. Subunit 8, of the mitochondrial membrane ATP synthase complex (F(1)F(0) ATP synthase or Complex V) that produces ATP from ADP in the presence of a proton gradient across the membrane which is generated by electron transport complexes of the respiratory chain. ATP synthase complex consist of a soluble F(1) head domain - the catalytic core - and a membrane F(1) domain - the membrane proton channel. These two domains are linked by a central stalk rotating inside the F(1) region and a stationary peripheral stalk. During catalysis, ATP synthesis in the catalytic domain of F(1) is coupled via a rotary mechanism of the central stalk subunits to proton translocation. In vivo, can only synthesize ATP although its ATP hydrolase activity can be activated artificially in vitro. Part of the complex F(0) domain. This is ATP synthase F(0) complex subunit 8 from Lycodon semicarinatus (Ryukyu odd-tooth snake).